We begin with the raw amino-acid sequence, 161 residues long: 3-isopropylmalate dehydratase small subunit (161 aa).

The protein belongs to the LeuD family. LeuD type 2 subfamily. As to quaternary structure, heterodimer of LeuC and LeuD.

It carries out the reaction (2R,3S)-3-isopropylmalate = (2S)-2-isopropylmalate. Its pathway is amino-acid biosynthesis; L-leucine biosynthesis; L-leucine from 3-methyl-2-oxobutanoate: step 2/4. Its function is as follows. Catalyzes the isomerization between 2-isopropylmalate and 3-isopropylmalate, via the formation of 2-isopropylmaleate. The polypeptide is 3-isopropylmalate dehydratase small subunit (Pyrobaculum islandicum (strain DSM 4184 / JCM 9189 / GEO3)).